The primary structure comprises 167 residues: MICKKKFLSPIINLFHSIIINCKGMYITLRYMFKPKVTLNYPLEKGPLSTRFRGEHALRKYKNGEERCIACKLCEAICPAQAITIEAQERDDGSRRTVRYDIDMTKCIYCGFCQEACPVDAIVEGPNFEYATETREELMYNKSKLLHNGQVWEEAIDFRIKKNSQFY.

2 consecutive 4Fe-4S ferredoxin-type domains span residues 59-88 and 98-127; these read RKYKNGEERCIACKLCEAICPAQAITIEAQ and VRYDIDMTKCIYCGFCQEACPVDAIVEGPN. Residues Cys68, Cys71, Cys74, Cys78, Cys107, Cys110, Cys113, and Cys117 each coordinate [4Fe-4S] cluster.

The protein belongs to the complex I 23 kDa subunit family. As to quaternary structure, NDH-1 is composed of 14 different subunits. Subunits NuoA, H, J, K, L, M, N constitute the membrane sector of the complex. It depends on [4Fe-4S] cluster as a cofactor.

The protein localises to the cell inner membrane. The enzyme catalyses a quinone + NADH + 5 H(+)(in) = a quinol + NAD(+) + 4 H(+)(out). Its function is as follows. NDH-1 shuttles electrons from NADH, via FMN and iron-sulfur (Fe-S) centers, to quinones in the respiratory chain. The immediate electron acceptor for the enzyme in this species is believed to be ubiquinone. Couples the redox reaction to proton translocation (for every two electrons transferred, four hydrogen ions are translocated across the cytoplasmic membrane), and thus conserves the redox energy in a proton gradient. This chain is NADH-quinone oxidoreductase subunit I, found in Ehrlichia canis (strain Jake).